The chain runs to 685 residues: MPEQNRILCRELSLLAFNRRVLAQAEDQNVPLLERLCFLCIVSSNLDEFFEVRMAWLKRENKLHPRRRLDNGKMPSETIADVTEAARSLIRHQYDLFNNVLQPELAREGIHFYRRRNWTDTQKKWIEDYFDRELLPILTPIGLDPSHPFPRPLNKSLNFAVELDGTDAFGRPSGMAIVQAPRILPRVVPLPSELCGGGHGFVFLSSILHAHVGKLFPGMNVKGCHQFRLTRDSDLTVDEEDVQNLRAAIQNELHDREYGDGVRLEVADTCPAYIRDFLLAQFKLTAAELYQVKGPVNLVRLNAVPDLVDRPDLKFPPHTQGRLKALGKNGSIFKLIRRAPILLHHPYQSFNPVVEMMREAAADPAVLAVKMTIYRTGTRSELVRALMKAALAGKQVTVVVELMARFDEANNVNWAKQLEEAGAHVVYGVFGYKVHAKMALVIRREDGVLKRYAHLGTGNYHQGTSRIYTDFGLITADEQITADVNTLFMEITGLGKPGRLNKLYQSPFTLHKMVIDRIARETEHAKAGKPARITAKMNSLIEPTVIEALYRASAAGVQIDLIVRGMCTLRPGVKGLSENIRVRSIIGRQLEHARVYCFHNNGADDTFISSADWMGRNFFRRIETAAPITAPELKKRVIREGLEMALADNTHAWLMQPDGGYIRAAPAEGESEADLQNDLWTLLGG.

Asn45 contributes to the ATP binding site. Mg(2+) is bound by residues Arg375 and Arg405. The Phosphohistidine intermediate role is filled by His435. Tyr468, Arg564, and His592 together coordinate ATP.

The protein belongs to the polyphosphate kinase 1 (PPK1) family. Requires Mg(2+) as cofactor. Post-translationally, an intermediate of this reaction is the autophosphorylated ppk in which a phosphate is covalently linked to a histidine residue through a N-P bond.

The enzyme catalyses [phosphate](n) + ATP = [phosphate](n+1) + ADP. Its function is as follows. Catalyzes the reversible transfer of the terminal phosphate of ATP to form a long-chain polyphosphate (polyP). This Neisseria meningitidis serogroup C (strain 053442) protein is Polyphosphate kinase.